The primary structure comprises 101 residues: NAD(P)H-quinone oxidoreductase subunit 4L, chloroplastic (101 aa).

The next 3 membrane-spanning stretches (helical) occupy residues 2 to 22 (MFEH…YGLI), 32 to 52 (ICLE…SDLF), and 61 to 81 (IFAI…LSIL).

The protein belongs to the complex I subunit 4L family. In terms of assembly, NDH is composed of at least 16 different subunits, 5 of which are encoded in the nucleus.

Its subcellular location is the plastid. The protein resides in the chloroplast thylakoid membrane. The catalysed reaction is a plastoquinone + NADH + (n+1) H(+)(in) = a plastoquinol + NAD(+) + n H(+)(out). The enzyme catalyses a plastoquinone + NADPH + (n+1) H(+)(in) = a plastoquinol + NADP(+) + n H(+)(out). NDH shuttles electrons from NAD(P)H:plastoquinone, via FMN and iron-sulfur (Fe-S) centers, to quinones in the photosynthetic chain and possibly in a chloroplast respiratory chain. The immediate electron acceptor for the enzyme in this species is believed to be plastoquinone. Couples the redox reaction to proton translocation, and thus conserves the redox energy in a proton gradient. The sequence is that of NAD(P)H-quinone oxidoreductase subunit 4L, chloroplastic from Agrostis stolonifera (Creeping bentgrass).